A 336-amino-acid chain; its full sequence is Probable allantoicase (336 aa).

It belongs to the allantoicase family.

The catalysed reaction is allantoate + H2O = (S)-ureidoglycolate + urea. It participates in nitrogen metabolism; (S)-allantoin degradation; (S)-ureidoglycolate from allantoate (aminidohydrolase route): step 1/1. The protein is Probable allantoicase of Ralstonia nicotianae (strain ATCC BAA-1114 / GMI1000) (Ralstonia solanacearum).